The primary structure comprises 59 residues: UPF0434 protein Sbal_1685 (59 aa).

The protein belongs to the UPF0434 family.

The protein is UPF0434 protein Sbal_1685 of Shewanella baltica (strain OS155 / ATCC BAA-1091).